Here is a 446-residue protein sequence, read N- to C-terminus: GTPase Der (446 aa).

2 EngA-type G domains span residues 3-167 (PVLA…AFDE) and 180-353 (IRLA…ASAT). GTP contacts are provided by residues 9–16 (GRPNVGKS), 56–60 (DTGGF), 119–122 (NKAE), 186–193 (GRPNVGKS), 233–237 (DTAGL), and 298–301 (NKWD). The KH-like domain maps to 354–438 (KKLATPVLTR…PMRIEMKSSR (85 aa)).

The protein belongs to the TRAFAC class TrmE-Era-EngA-EngB-Septin-like GTPase superfamily. EngA (Der) GTPase family. Associates with the 50S ribosomal subunit.

In terms of biological role, GTPase that plays an essential role in the late steps of ribosome biogenesis. The chain is GTPase Der from Methylibium petroleiphilum (strain ATCC BAA-1232 / LMG 22953 / PM1).